The chain runs to 494 residues: Syntaphilin (494 aa).

The tract at residues 1–75 is disordered; the sequence is MAMSLPGSRR…GIKPPTPEQY (75 aa). Residues 7–49 show a composition bias toward low complexity; sequence GSRRTSAGSRRRTSPPVSVRDAYGTSSLSSSSNSGSYKGSDSS. Residues 79-161 adopt a coiled-coil conformation; that stretch reads LQQKEVCIRH…VKNNLIDKDK (83 aa). 2 disordered regions span residues 191 to 246 and 338 to 398; these read MAKE…SGFA and CGTD…GQSV. S200 and S204 each carry phosphoserine. Residues 207 to 217 are compositionally biased toward polar residues; that stretch reads RSLTRSSTYTK. T214 carries the post-translational modification Phosphothreonine. Position 219 is a phosphoserine (S219). Over residues 230–246 the composition is skewed to low complexity; the sequence is GDPSSGSAEDGADSGFA. Basic and acidic residues predominate over residues 344 to 353; that stretch reads SGDRCPELDA. Residues 425 to 444 form a helical membrane-spanning segment; sequence YIVDLLAVVVPAVPTVAWLC.

Binds to STX1A. Interacts with DNM1; this interaction inhibits the binding of DNM1 to AMPH and DNM1-receptor-mediated endocytosis. In terms of tissue distribution, brain specific. Found in synapses.

The protein resides in the membrane. It is found in the synapse. The protein localises to the synaptosome. Functionally, inhibits SNARE complex formation by absorbing free STX1A. The protein is Syntaphilin of Homo sapiens (Human).